Here is a 130-residue protein sequence, read N- to C-terminus: uncharacterized protein (130 aa).

Residues 1–28 (MELAKERNGPHQKHHGQCQNHCTSPNTV) are disordered. Polar residues predominate over residues 17 to 28 (QCQNHCTSPNTV).

This is an uncharacterized protein from Saccharomyces cerevisiae (strain ATCC 204508 / S288c) (Baker's yeast).